Consider the following 159-residue polypeptide: Ribosomal RNA large subunit methyltransferase H (159 aa).

Residues L76, G108, and 127 to 132 each bind S-adenosyl-L-methionine; that span reads FSKMTF.

This sequence belongs to the RNA methyltransferase RlmH family. Homodimer.

Its subcellular location is the cytoplasm. The enzyme catalyses pseudouridine(1915) in 23S rRNA + S-adenosyl-L-methionine = N(3)-methylpseudouridine(1915) in 23S rRNA + S-adenosyl-L-homocysteine + H(+). Functionally, specifically methylates the pseudouridine at position 1915 (m3Psi1915) in 23S rRNA. This Lachnoclostridium phytofermentans (strain ATCC 700394 / DSM 18823 / ISDg) (Clostridium phytofermentans) protein is Ribosomal RNA large subunit methyltransferase H.